Reading from the N-terminus, the 314-residue chain is Oxaloacetate tautomerase FAHD2A, mitochondrial (314 aa).

The transit peptide at M1–L84 directs the protein to the mitochondrion. Residues E159, E161, and D190 each coordinate Mg(2+).

The protein belongs to the FAH family. Mg(2+) serves as cofactor. It depends on Mn(2+) as a cofactor.

Its subcellular location is the mitochondrion. The catalysed reaction is oxaloacetate = enol-oxaloacetate. Its function is as follows. Tautomerase that converts enol-oxaloacetate, a strong inhibitor of succinate dehydrogenase, to the physiological keto form of oxaloacetate. It is thereby required to maximize aerobic respiration efficiency by preventing succinate dehydrogenase inhibition. The sequence is that of Oxaloacetate tautomerase FAHD2A, mitochondrial from Homo sapiens (Human).